Here is a 962-residue protein sequence, read N- to C-terminus: MAPAPTSVPLVSQPNVISDLKTALAVQGSASDHPRTLHQLLSQAAERYPLQQLGFISSSAHDSSIQTKSYSTFNQHVRNLARALTDWKKPVGSIVVVYLTEHEDNMAAVWACLLAGYIPCLQPALSAQQSHKEGHINHIKNLFLSATWLTNEIGAEQVMSVDGIDIHLFSDLKLAAEGYNVPADWAAVEAKPDDEAILFLTSGSTGFSKAVVHTHRTIIASCYAKGQSYGLTSETNVLNWVGFDHVAGSLEMHITPLLFGSYQLHVHASTILSDPLSFLRLIDDKSINIAFAPNFLLAKLARDLEKRSELYGAFDLSSVKRINSGGEAVVSKTAKIFVTVLKALAKDPSKVSFVVSAGFGMTETCAGCIYDPIDLSVINPMHEFLDLGRPIQGCEMRIVDPEDGITLRPDGESGELQVRGPMVFARYYNNPQATSSSFVEGRWYRTGDIGIIEKGVMRLSGRIKDTVIVHGVSYGIPELETYLQLVEGVTHSFLAAAPYRAPGQETEGFVVFYSPTFDLNEEDASNKLAATHRALRDISVKMITLPPQQIIPIPIDQMEKTTLGKLSRARLLTLFKQGELAKHIARADELLSEARGATFVVPATITETAFAKIFAGVFNLSTDDISAADNFFELGGTSIDVIRLKREGETVFGLPEIPIIQILKHPVLRDLAKYIDALVSKDNTQQEYDPIVPLQLTGNKTPIFFVHPGVGEVLIFVNLAKYFQNERPFYAFRARGFEPGQPFFSKMDEMVSSYAAAMKRTQPKGPYAIAGYSYGGVIAFEVAKRLEAGGDEVKFVGLINIPPHIADRMHEIDWTGGMLNLSYFLGLVSKQDADDLAPTLRPLTRKEQLDVVWKLSPPERLVELQLTPEKLDHWVDIAGSLIECGKDYNPSGSVAVADVFYAIPLRGSKSDWLNNQLKPWSGFSRTEPAFTDVPGRHYTLMDFDHVPQFQKIFRSRLEARGV.

The tract at residues F55–V469 is adenylation (A) domain. The Carrier domain occupies V601–V679. The interval T606–D676 is thiolation and peptide carrier (T) domain. S638 is modified (O-(pantetheine 4'-phosphoryl)serine). Residues P702–I805 are thioesterase (TE) domain.

It belongs to the ATP-dependent AMP-binding enzyme family.

It functions in the pathway secondary metabolite biosynthesis. In terms of biological role, an L-tyrosine:2-oxoglutarate aminotransferase (probably amt1) and atromentin synthetase nps3 catalyze consecutive steps to turn over L-tyrosine into atromentin, which represents the generic precursor molecule for the entire terphenylquinone and pulvinic acid family of pigments, which are widely distributed secondary metabolites in homobasidiomycetes. The first step catalyzed by the aminotransferase converts L-tyrosine in to 4-hydroxyphenylpyruvate (4-HPP). Adenylation of two 4-HPP monomers by the nps3 adenylation (A) domain, covalent tethering of the monomers as a thioester and oxoester onto the nps3 thiolation (T) and thioesterase (TE) domains, respectively, and symmetric C-C-bond formation between two monomers catalyzed by the nps3 TE domain leads to atromentin. Follow-up products of atromentin in S.lacrymans include atromentic acid, xerocomic acid, isoxerocomic acid and variegatic acid. The sequence is that of Atromentin synthetase nps3 (nps3) from Serpula lacrymans var. lacrymans (strain S7.9) (Dry rot fungus).